Consider the following 991-residue polypeptide: Regulator of telomere elongation helicase 1 homolog (991 aa).

The region spanning 7–319 (NGIPVNFPFE…DDLVLLKEIL (313 aa)) is the Helicase ATP-binding domain. 42–49 (SPTGTGKT) is an ATP binding site. [4Fe-4S] cluster-binding residues include Cys148, Cys166, Cys175, and Cys211. Residues 254 to 257 (DEAH) carry the DEAH box motif. Residues 812–833 (SMKVNPHSRSTKSAGDDAEAGG) form a disordered region.

It belongs to the helicase family. RAD3/XPD subfamily.

It localises to the nucleus. It carries out the reaction ATP + H2O = ADP + phosphate + H(+). A probable ATP-dependent DNA helicase implicated in DNA repair and the maintenance of genomic stability. Acts as an anti-recombinase to counteract toxic recombination and limit crossover during meiosis. Regulates meiotic recombination and crossover homeostasis by physically dissociating strand invasion events and thereby promotes noncrossover repair by meiotic synthesis dependent strand annealing (SDSA) as well as disassembly of D loop recombination intermediates. In Anopheles gambiae (African malaria mosquito), this protein is Regulator of telomere elongation helicase 1 homolog.